The following is a 357-amino-acid chain: Cell division control protein 10 (357 aa).

The Septin-type G domain maps to 34–306 (RGFQFNIMVV…ETFRSKQLIA (273 aa)). Residues 44–51 (GRSGLGKS) are G1 motif. GTP-binding positions include 44–51 (GRSGLGKS), Thr78, Gly104, 184–192 (KSDSLTLDE), Gly240, and Arg255. Positions 101–104 (DTPG) are G3 motif. Residues 183-186 (AKSD) form a G4 motif region. The interval 310 to 357 (NASNPNRQSQLQKDQGQTSQQSNQDLKNTSGVPNAPMFQSTTGTAAAR) is disordered.

Belongs to the TRAFAC class TrmE-Era-EngA-EngB-Septin-like GTPase superfamily. Septin GTPase family.

The protein localises to the bud neck. Functionally, plays a role in the cell cycle. Involved in the formation of the ring of filaments in the neck region at the mother-bud junction during mitosis. The chain is Cell division control protein 10 (CDC10) from Candida albicans (strain SC5314 / ATCC MYA-2876) (Yeast).